The chain runs to 202 residues: Large ribosomal subunit protein bL9 (202 aa).

The disordered stretch occupies residues 168-202 (DEAGFTEDYDPNAEPGEIPTELQDEAPAAEATDEA). Over residues 192–202 (EAPAAEATDEA) the composition is skewed to low complexity.

This sequence belongs to the bacterial ribosomal protein bL9 family.

In terms of biological role, binds to the 23S rRNA. This chain is Large ribosomal subunit protein bL9, found in Rhizorhabdus wittichii (strain DSM 6014 / CCUG 31198 / JCM 15750 / NBRC 105917 / EY 4224 / RW1) (Sphingomonas wittichii).